The chain runs to 818 residues: Dipeptidyl aminopeptidase B (818 aa).

Residues 1-29 are Cytoplasmic-facing; that stretch reads MEGGEEEVERIPDELFDTKKKHLLDKLIR. Residues 30–45 form a helical; Signal-anchor for type II membrane protein membrane-spanning segment; that stretch reads VGIILVLLIWGTVLLL. Over 46–818 the chain is Lumenal; it reads KSIPHHSNTP…KRAFDGQFVK (773 aa). Asn-63, Asn-79, Asn-110, Asn-139, Asn-372, Asn-392, and Asn-421 each carry an N-linked (GlcNAc...) asparagine glycan. Ser-679 acts as the Charge relay system in catalysis. The N-linked (GlcNAc...) asparagine glycan is linked to Asn-738. Active-site charge relay system residues include Asp-756 and His-789.

This sequence belongs to the peptidase S9B family.

The protein localises to the vacuole membrane. The chain is Dipeptidyl aminopeptidase B (DAP2) from Saccharomyces cerevisiae (strain ATCC 204508 / S288c) (Baker's yeast).